We begin with the raw amino-acid sequence, 158 residues long: Inorganic pyrophosphatase (158 aa).

Glutamate 8 provides a ligand contact to Mg(2+). 3 residues coordinate substrate: lysine 16, arginine 30, and tyrosine 42. Mg(2+)-binding residues include aspartate 52, aspartate 57, aspartate 84, and aspartate 89. Aspartate 89 (proton acceptor) is an active-site residue. Tyrosine 125 contacts substrate.

This sequence belongs to the PPase family. As to quaternary structure, homohexamer. Mg(2+) serves as cofactor.

It localises to the cytoplasm. It catalyses the reaction diphosphate + H2O = 2 phosphate + H(+). Functionally, catalyzes the hydrolysis of inorganic pyrophosphate (PPi) forming two phosphate ions. In Corynebacterium efficiens (strain DSM 44549 / YS-314 / AJ 12310 / JCM 11189 / NBRC 100395), this protein is Inorganic pyrophosphatase.